A 216-amino-acid polypeptide reads, in one-letter code: Large ribosomal subunit protein uL3 (216 aa).

The protein belongs to the universal ribosomal protein uL3 family. As to quaternary structure, part of the 50S ribosomal subunit. Forms a cluster with proteins L14 and L19.

One of the primary rRNA binding proteins, it binds directly near the 3'-end of the 23S rRNA, where it nucleates assembly of the 50S subunit. This is Large ribosomal subunit protein uL3 from Symbiobacterium thermophilum (strain DSM 24528 / JCM 14929 / IAM 14863 / T).